Here is a 139-residue protein sequence, read N- to C-terminus: Membrane protein YqfB (139 aa).

A helical membrane pass occupies residues 3-23 (DLLTNPLIIAAIIGIISAIFG). The disordered stretch occupies residues 25–87 (KSKEEKQNSQ…TARNLKGLER (63 aa)). Positions 62–97 (NRMEQARREAEERRRETARNLKGLERDLAAAKQKTV) form a coiled coil. Over residues 65 to 87 (EQARREAEERRRETARNLKGLER) the composition is skewed to basic and acidic residues.

It is found in the cell membrane. The chain is Membrane protein YqfB (yqfB) from Bacillus subtilis (strain 168).